Consider the following 71-residue polypeptide: Beta-defensin 9 (71 aa).

Residues 1 to 23 (MRTLCSLLLICCLLFSYDTPVVG) form the signal peptide. 3 cysteine pairs are disulfide-bonded: Cys-37–Cys-66, Cys-44–Cys-59, and Cys-49–Cys-67.

Belongs to the beta-defensin family.

Its subcellular location is the secreted. Functionally, has antibacterial activity. This chain is Beta-defensin 9 (Defb9), found in Rattus norvegicus (Rat).